Reading from the N-terminus, the 339-residue chain is 7,8-didemethyl-8-hydroxy-5-deazariboflavin synthase (339 aa).

The Radical SAM core domain maps to 13–258; that stretch reads ITYSKNIFIP…RDTDVSIQVP (246 aa). The [4Fe-4S] cluster site is built by Cys27, Cys31, and Cys34.

This sequence belongs to the radical SAM superfamily. CofG family. As to quaternary structure, consists of two subunits, CofG and CofH. [4Fe-4S] cluster serves as cofactor.

The catalysed reaction is 5-amino-5-(4-hydroxybenzyl)-6-(D-ribitylimino)-5,6-dihydrouracil + S-adenosyl-L-methionine = 7,8-didemethyl-8-hydroxy-5-deazariboflavin + 5'-deoxyadenosine + L-methionine + NH4(+) + H(+). Its pathway is cofactor biosynthesis; coenzyme F0 biosynthesis. Its function is as follows. Catalyzes the radical-mediated synthesis of 7,8-didemethyl-8-hydroxy-5-deazariboflavin from 5-amino-5-(4-hydroxybenzyl)-6-(D-ribitylimino)-5,6-dihydrouracil. This chain is 7,8-didemethyl-8-hydroxy-5-deazariboflavin synthase, found in Methanobrevibacter smithii (strain ATCC 35061 / DSM 861 / OCM 144 / PS).